Here is a 141-residue protein sequence, read N- to C-terminus: Large ribosomal subunit protein uL11 (141 aa).

This sequence belongs to the universal ribosomal protein uL11 family. In terms of assembly, part of the ribosomal stalk of the 50S ribosomal subunit. Interacts with L10 and the large rRNA to form the base of the stalk. L10 forms an elongated spine to which L12 dimers bind in a sequential fashion forming a multimeric L10(L12)X complex. In terms of processing, one or more lysine residues are methylated.

Forms part of the ribosomal stalk which helps the ribosome interact with GTP-bound translation factors. The polypeptide is Large ribosomal subunit protein uL11 (Streptococcus gordonii (strain Challis / ATCC 35105 / BCRC 15272 / CH1 / DL1 / V288)).